Here is a 455-residue protein sequence, read N- to C-terminus: tRNA-2-methylthio-N(6)-dimethylallyladenosine synthase (455 aa).

The region spanning 18–133 is the MTTase N-terminal domain; it reads KKLFIETYGC…LPELIAAVEA (116 aa). 6 residues coordinate [4Fe-4S] cluster: Cys-27, Cys-63, Cys-97, Cys-171, Cys-175, and Cys-178. Residues 157–390 form the Radical SAM core domain; the sequence is CGNHISGFVS…IALQNRLSAE (234 aa). The 63-residue stretch at 393–455 folds into the TRAM domain; sequence QRCIGKTYEV…SSATLKGEEV (63 aa).

It belongs to the methylthiotransferase family. MiaB subfamily. In terms of assembly, monomer. [4Fe-4S] cluster serves as cofactor.

The protein localises to the cytoplasm. It carries out the reaction N(6)-dimethylallyladenosine(37) in tRNA + (sulfur carrier)-SH + AH2 + 2 S-adenosyl-L-methionine = 2-methylsulfanyl-N(6)-dimethylallyladenosine(37) in tRNA + (sulfur carrier)-H + 5'-deoxyadenosine + L-methionine + A + S-adenosyl-L-homocysteine + 2 H(+). Its function is as follows. Catalyzes the methylthiolation of N6-(dimethylallyl)adenosine (i(6)A), leading to the formation of 2-methylthio-N6-(dimethylallyl)adenosine (ms(2)i(6)A) at position 37 in tRNAs that read codons beginning with uridine. This Bacteroides thetaiotaomicron (strain ATCC 29148 / DSM 2079 / JCM 5827 / CCUG 10774 / NCTC 10582 / VPI-5482 / E50) protein is tRNA-2-methylthio-N(6)-dimethylallyladenosine synthase.